The sequence spans 335 residues: Anthranilate phosphoribosyltransferase (335 aa).

5-phospho-alpha-D-ribose 1-diphosphate contacts are provided by residues Gly79, Gly82 to Asp83, Thr87, Asn89 to Thr92, Lys107 to Ser115, and Ser119. Residue Gly79 coordinates anthranilate. Mg(2+) is bound at residue Ser91. Residue Asn110 coordinates anthranilate. An anthranilate-binding site is contributed by Arg165. Mg(2+)-binding residues include Asp223 and Glu224.

This sequence belongs to the anthranilate phosphoribosyltransferase family. In terms of assembly, homodimer. Requires Mg(2+) as cofactor.

It catalyses the reaction N-(5-phospho-beta-D-ribosyl)anthranilate + diphosphate = 5-phospho-alpha-D-ribose 1-diphosphate + anthranilate. Its pathway is amino-acid biosynthesis; L-tryptophan biosynthesis; L-tryptophan from chorismate: step 2/5. Functionally, catalyzes the transfer of the phosphoribosyl group of 5-phosphorylribose-1-pyrophosphate (PRPP) to anthranilate to yield N-(5'-phosphoribosyl)-anthranilate (PRA). This is Anthranilate phosphoribosyltransferase from Buchnera aphidicola subsp. Diuraphis noxia.